The chain runs to 140 residues: Lymphocyte antigen 6L (140 aa).

Residues 1–20 (MAPLLLVLWASLVSMELTGG) form the signal peptide. The UPAR/Ly6 domain occupies 31–124 (LSCFECFKVL…GSWEGFWSLP (94 aa)). Intrachain disulfides connect cysteine 33–cysteine 50 and cysteine 105–cysteine 110. Serine 116 carries the GPI-anchor amidated serine lipid modification. Positions 117 to 140 (WEGFWSLPGRLLLPMGLGLFCTLL) are cleaved as a propeptide — removed in mature form.

Its subcellular location is the cell membrane. This is Lymphocyte antigen 6L from Mus musculus (Mouse).